The sequence spans 692 residues: DNA ligase (692 aa).

Residues 35-39 (DLVYD), 88-89 (SL), and glutamate 117 contribute to the NAD(+) site. Catalysis depends on lysine 119, which acts as the N6-AMP-lysine intermediate. NAD(+) is bound by residues arginine 140, glutamate 176, lysine 301, and lysine 325. Zn(2+)-binding residues include cysteine 416, cysteine 419, cysteine 434, and cysteine 439. Residues 611–692 (LTNQSNSWAS…FDLIKNSKKT (82 aa)) enclose the BRCT domain.

It belongs to the NAD-dependent DNA ligase family. LigA subfamily. Requires Mg(2+) as cofactor. It depends on Mn(2+) as a cofactor.

It catalyses the reaction NAD(+) + (deoxyribonucleotide)n-3'-hydroxyl + 5'-phospho-(deoxyribonucleotide)m = (deoxyribonucleotide)n+m + AMP + beta-nicotinamide D-nucleotide.. In terms of biological role, DNA ligase that catalyzes the formation of phosphodiester linkages between 5'-phosphoryl and 3'-hydroxyl groups in double-stranded DNA using NAD as a coenzyme and as the energy source for the reaction. It is essential for DNA replication and repair of damaged DNA. The sequence is that of DNA ligase from Mesomycoplasma hyopneumoniae (strain J / ATCC 25934 / NCTC 10110) (Mycoplasma hyopneumoniae).